A 197-amino-acid chain; its full sequence is Guanylyl cyclase-activating protein 2 (197 aa).

Glycine 2 is lipidated: N-myristoyl glycine. EF-hand domains follow at residues 15–50 (DVAE…QDNQ), 51–86 (EAAD…VLRG), 87–122 (KLEH…IYNL), and 138–173 (SPEQ…DKWV). Ca(2+) is bound by residues aspartate 64, asparagine 66, aspartate 68, threonine 70, glutamate 75, aspartate 100, aspartate 102, asparagine 104, cysteine 106, glutamate 111, aspartate 151, asparagine 153, aspartate 155, glutamine 157, and glutamate 162.

Low expression in retina.

Stimulates guanylyl cyclase 1 (GC1) and GC2 when free calcium ions concentration is low and inhibits guanylyl cyclases when free calcium ions concentration is elevated. This Ca(2+)-sensitive regulation of guanylyl cyclase (GC) is a key event in recovery of the dark state of rod photoreceptors following light exposure. The chain is Guanylyl cyclase-activating protein 2 (GUCA1B) from Lithobates pipiens (Northern leopard frog).